The sequence spans 192 residues: Flagellar transcriptional regulator FlhC (192 aa).

Zn(2+)-binding residues include Cys137, Cys140, Cys157, and Cys160.

The protein belongs to the FlhC family. Heterohexamer composed of two FlhC and four FlhD subunits. Each FlhC binds a FlhD dimer, forming a heterotrimer, and a hexamer assembles by dimerization of two heterotrimers. Zn(2+) serves as cofactor.

It localises to the cytoplasm. Functionally, functions in complex with FlhD as a master transcriptional regulator that regulates transcription of several flagellar and non-flagellar operons by binding to their promoter region. Activates expression of class 2 flagellar genes, including fliA, which is a flagellum-specific sigma factor that turns on the class 3 genes. Also regulates genes whose products function in a variety of physiological pathways. This Escherichia coli O6:H1 (strain CFT073 / ATCC 700928 / UPEC) protein is Flagellar transcriptional regulator FlhC.